The sequence spans 277 residues: MAWLEGQSVFLTGGVAGLGRALVKRLVEEGANVTVLDRNARGLDELVESFKGRVAGSPGDVRNLADNRKAVELAVERFGKLDTFNRQRRHLGLLCPPCRPAGRCHQRSFDEVIGINLMGYVMGIKAAAPALVRSRGSVILTLSSSAFYAGGGGVLYTVAKHAAVGLIKQAAHELAPYVRVNGVAPGGIASDLRGPKSLGMGEQSITSVPLADLVKDIAPIGRLSDTEEYTGSYVYLASARNSAPATGVIINCDGGMGVRSVLGPASGGKGLLEKFGG.

Residues 10-37 (FLTG…TVLD) and Asp-60 contribute to the NAD(+) site. Position 143 (Ser-143) interacts with substrate. Tyr-156 acts as the Proton acceptor in catalysis. Lys-160 lines the NAD(+) pocket.

This sequence belongs to the short-chain dehydrogenases/reductases (SDR) family. Homotetramer.

The enzyme catalyses (3S,4R)-3,4-dihydrophenanthrene-3,4-diol + NAD(+) = phenanthrene-3,4-diol + NADH + H(+). Its activity is regulated as follows. Inhibited by heavy metal such as Hg(2+) and by p-chloromercuribenzoate. Its function is as follows. Involved in the degradation of phenanthrene. Catalyzes the oxidation of cis-phenanthrene dihydrodiol (PDD) to yield phenanthrenediol. It can use either NAD or NADP as electron acceptor, however NAD is preferred to NADP. The protein is Cis-3,4-dihydrophenanthrene-3,4-diol dehydrogenase (phnB) of Alcaligenes faecalis.